Consider the following 200-residue polypeptide: Recoverin (200 aa).

Residue glycine 2 is the site of N-myristoyl glycine attachment. EF-hand domains follow at residues 25 to 60 (EEEL…FPDT), 61 to 96 (DPKA…TTAG), 97 to 132 (KTNQ…IFKM), and 147 to 182 (TPEK…NKEI). Cysteine 39 is modified (cysteine sulfenic acid (-SOH)). Residues aspartate 74, asparagine 76, aspartate 78, threonine 80, glutamate 85, aspartate 110, aspartate 112, asparagine 114, threonine 116, and glutamate 121 each coordinate Ca(2+). Residues 189–192 (EPQK) form an interaction with GRK1 region.

The protein belongs to the recoverin family. Homodimer; disulfide-linked. Homodimerization is caused by prolonged intense illumination. May form a complex composed of RHO, GRK1 and RCVRN in a Ca(2+)-dependent manner; RCVRN prevents the interaction between GRK1 and RHO. Interacts (via C-terminus) with GRK1 (via N-terminus); the interaction is Ca(2+)-dependent. In terms of processing, the N-terminal glycine is linked to one of four different types of acyl groups. The most abundant is myristoleate (14:1), but 14:0, 14:2, and 12:0 acyl residues are also present. The Ca(2+) induced exposure of the myristoyl group, known as the calcium-myristoyl switch, promotes RCVRN binding to the photoreceptor cell membranes only when intracellular Ca(2+) concentration is high. Post-translationally, oxidation on Cys-39 occurs in response to prolonged intense illumination and results in the formation of disulfide homodimers, and to a lesser extent disulfide-linked heterodimers. Retina and pineal gland.

It is found in the photoreceptor inner segment. The protein resides in the cell projection. It localises to the cilium. Its subcellular location is the photoreceptor outer segment. The protein localises to the photoreceptor outer segment membrane. It is found in the perikaryon. Its function is as follows. Acts as a calcium sensor and regulates phototransduction of cone and rod photoreceptor cells. Modulates light sensitivity of cone photoreceptor in dark and dim conditions. In response to high Ca(2+) levels induced by low light levels, prolongs RHO/rhodopsin activation in rod photoreceptor cells by binding to and inhibiting GRK1-mediated phosphorylation of RHO/rhodopsin. Plays a role in scotopic vision/enhances vision in dim light by enhancing signal transfer between rod photoreceptors and rod bipolar cells. Improves rod photoreceptor sensitivity in dim light and mediates response of rod photoreceptors to facilitate detection of change and motion in bright light. The polypeptide is Recoverin (RCVRN) (Homo sapiens (Human)).